The primary structure comprises 176 residues: NAD(P)H-quinone oxidoreductase subunit 6, chloroplastic (176 aa).

The next 5 helical transmembrane spans lie at 10 to 30, 32 to 52, 61 to 81, 92 to 112, and 152 to 172; these read FLLV…VLLP, PIFS…LYIL, AQLL…VMFM, LWTV…FSLL, and FFLP…GAIS.

The protein belongs to the complex I subunit 6 family. NDH is composed of at least 16 different subunits, 5 of which are encoded in the nucleus.

The protein resides in the plastid. It localises to the chloroplast thylakoid membrane. The catalysed reaction is a plastoquinone + NADH + (n+1) H(+)(in) = a plastoquinol + NAD(+) + n H(+)(out). It catalyses the reaction a plastoquinone + NADPH + (n+1) H(+)(in) = a plastoquinol + NADP(+) + n H(+)(out). In terms of biological role, NDH shuttles electrons from NAD(P)H:plastoquinone, via FMN and iron-sulfur (Fe-S) centers, to quinones in the photosynthetic chain and possibly in a chloroplast respiratory chain. The immediate electron acceptor for the enzyme in this species is believed to be plastoquinone. Couples the redox reaction to proton translocation, and thus conserves the redox energy in a proton gradient. The chain is NAD(P)H-quinone oxidoreductase subunit 6, chloroplastic (ndhG) from Lepidium virginicum (Virginia pepperweed).